A 122-amino-acid chain; its full sequence is Large ribosomal subunit protein uL14 (122 aa).

This sequence belongs to the universal ribosomal protein uL14 family. In terms of assembly, part of the 50S ribosomal subunit. Forms a cluster with proteins L3 and L19. In the 70S ribosome, L14 and L19 interact and together make contacts with the 16S rRNA in bridges B5 and B8.

In terms of biological role, binds to 23S rRNA. Forms part of two intersubunit bridges in the 70S ribosome. The sequence is that of Large ribosomal subunit protein uL14 from Thermodesulfovibrio yellowstonii (strain ATCC 51303 / DSM 11347 / YP87).